Here is a 433-residue protein sequence, read N- to C-terminus: MLRWNEESSQAQAAALTRPAVSASAKVEAICKTILAKVKEQGDDALLDMAKEFDNRANPRLRVPLDEINASEQALSAELKYAIDTAYANVKCFHEAQLPKDIKLSTQPGVVCELKYQAIEAVGIYVPGGSAPLPSSVIMQGVLAQLSGAKTVVLATPVQGDKAINPAILYAAKLCGITTLIESGGAGAIAAMAYGTESVPKVNKIFGPGNSFVTMAKQLVAQTVPGMAIDMPAGPSEVLVIADERANPEFIAADLLSQAEHGADSQVILLCNSESIIEQTQQALTRQLAKLSRKETAEQALANSSLILVDSIAQAFDVSAQYGPEHLILQLADSTPYLDKVKNAGSVFVGDYTPESAGDYASGTNHVLPTYGYSASYSSLNLLDFFRTYTVQTITKSGLTQLSKAILPLANAEGLDAHANAVSIRLEAIKNEQ.

Residues Ser-236, Gln-258, and His-261 each contribute to the substrate site. Zn(2+)-binding residues include Gln-258 and His-261. Active-site proton acceptor residues include Glu-325 and His-326. Residues His-326, Asp-359, Glu-413, and His-418 each coordinate substrate. Asp-359 contributes to the Zn(2+) binding site. Zn(2+) is bound at residue His-418.

Belongs to the histidinol dehydrogenase family. It depends on Zn(2+) as a cofactor.

It catalyses the reaction L-histidinol + 2 NAD(+) + H2O = L-histidine + 2 NADH + 3 H(+). It participates in amino-acid biosynthesis; L-histidine biosynthesis; L-histidine from 5-phospho-alpha-D-ribose 1-diphosphate: step 9/9. In terms of biological role, catalyzes the sequential NAD-dependent oxidations of L-histidinol to L-histidinaldehyde and then to L-histidine. This chain is Histidinol dehydrogenase, found in Pseudoalteromonas translucida (strain TAC 125).